The following is a 122-amino-acid chain: UPF0102 protein Atu0303 (122 aa).

Belongs to the UPF0102 family.

This is UPF0102 protein Atu0303 from Agrobacterium fabrum (strain C58 / ATCC 33970) (Agrobacterium tumefaciens (strain C58)).